The following is a 210-amino-acid chain: Rho-related GTP-binding protein RhoD (210 aa).

G24 to T31 provides a ligand contact to GTP. Residues Y46–Y54 carry the Effector region motif. Residues D71–Q75 and C129–D132 each bind GTP. Cysteine methyl ester is present on C207. C207 carries the S-geranylgeranyl cysteine lipid modification. A propeptide spans V208–T210 (removed in mature form).

This sequence belongs to the small GTPase superfamily. Rho family. As to quaternary structure, interacts (in GTP-bound form) with DIAPH2 isoform 3, DAPK3, FILIP1 and WHAMM. Interacts with PAK5. Interacts (independent of GTP-loaded status) with ANKFY1. As to expression, heart, placenta, liver, skeletal muscle, and pancreas and, with weaker intensity, in several other tissues.

It is found in the cell membrane. It localises to the early endosome. In terms of biological role, involved in endosome dynamics. May coordinate membrane transport with the function of the cytoskeleton. Involved in the internalization and trafficking of activated tyrosine kinase receptors such as PDGFRB. Participates in the reorganization of actin cytoskeleton; the function seems to involve WHAMM and includes regulation of filopodia formation and actin filament bundling. Can modulate the effect of DAPK3 in reorganization of actin cytoskeleton and focal adhesion dissolution. In Homo sapiens (Human), this protein is Rho-related GTP-binding protein RhoD.